A 738-amino-acid chain; its full sequence is Pentatricopeptide repeat-containing protein At5g65570 (738 aa).

PPR repeat units follow at residues 98 to 128, 129 to 163, 164 to 198, 200 to 230, 231 to 265, 266 to 300, 301 to 331, 332 to 366, 367 to 401, 402 to 432, 433 to 467, 468 to 502, and 503 to 537; these read AEIS…MSER, HIVT…NVLP, DEYT…GLEV, NVFV…VEEK, DVVL…KVQP, NEYT…GFES, ALAS…IEYP, NQVS…SIKP, NSFT…GFDR, DKYA…LSEV, DVIS…GLQP, NDVT…KIML, and TNDH…DLVL. Residues 537 to 612 are type E motif; sequence LWRTLLSACK…NPAMSWVEIN (76 aa). Residues 613–644 are type E(+) motif; sequence KETHTFMAGDLFSHPNSEQILENLEELIKKSK. A type DYW motif region spans residues 645-738; sequence DLGYVEDKSC…DGSCSCGDYW (94 aa).

Belongs to the PPR family. PCMP-H subfamily.

The protein is Pentatricopeptide repeat-containing protein At5g65570 (PCMP-H47) of Arabidopsis thaliana (Mouse-ear cress).